The following is a 101-amino-acid chain: Urease subunit beta (101 aa).

This sequence belongs to the urease beta subunit family. As to quaternary structure, heterotrimer of UreA (gamma), UreB (beta) and UreC (alpha) subunits. Three heterotrimers associate to form the active enzyme.

The protein resides in the cytoplasm. The enzyme catalyses urea + 2 H2O + H(+) = hydrogencarbonate + 2 NH4(+). It functions in the pathway nitrogen metabolism; urea degradation; CO(2) and NH(3) from urea (urease route): step 1/1. In Sinorhizobium medicae (strain WSM419) (Ensifer medicae), this protein is Urease subunit beta.